We begin with the raw amino-acid sequence, 25 residues long: Histone H1.1 (25 aa).

Residues 1–25 form the H15 domain; it reads MVSEAIAALKEREGSSEFAIGKKKE. Residues 1-25 form a disordered region; the sequence is MVSEAIAALKEREGSSEFAIGKKKE. Basic and acidic residues predominate over residues 9-25; that stretch reads LKEREGSSEFAIGKKKE.

It localises to the nucleus. It is found in the chromosome. In terms of biological role, histones H1 are necessary for the condensation of nucleosome chains into higher-order structures. This Triticum aestivum (Wheat) protein is Histone H1.1.